Here is a 61-residue protein sequence, read N- to C-terminus: Small ribosomal subunit protein uS14 (61 aa).

Residues cysteine 24, cysteine 27, cysteine 40, and cysteine 43 each contribute to the Zn(2+) site.

It belongs to the universal ribosomal protein uS14 family. Zinc-binding uS14 subfamily. Part of the 30S ribosomal subunit. Contacts proteins S3 and S10. Zn(2+) is required as a cofactor.

In terms of biological role, binds 16S rRNA, required for the assembly of 30S particles and may also be responsible for determining the conformation of the 16S rRNA at the A site. This chain is Small ribosomal subunit protein uS14, found in Macrococcus caseolyticus (strain JCSC5402) (Macrococcoides caseolyticum).